Consider the following 242-residue polypeptide: Basic agglutinin (242 aa).

Residues asparagine 45 and asparagine 220 are each glycosylated (N-linked (GlcNAc...) asparagine).

It belongs to the leguminous lectin family.

Its function is as follows. Lectin. This chain is Basic agglutinin (WBAI), found in Psophocarpus tetragonolobus (Winged bean).